The primary structure comprises 370 residues: Holliday junction branch migration complex subunit RuvB 2 (370 aa).

The interval 1 to 54 (MAIISSRAAGAEDPGQRQQKSSARRRESKLAFARAEGLLQPQAHPSEAQEESLR) is disordered. A large ATPase domain (RuvB-L) region spans residues 13 to 214 (DPGQRQQKSS…FGQVQRLRFY (202 aa)). Residues Leu53, Arg54, Gly95, Lys98, Thr99, Thr100, 161 to 163 (EDF), Arg204, Tyr214, and Arg251 each bind ATP. Thr99 lines the Mg(2+) pocket. The segment at 215 to 285 (EPHELAEIVL…VAAAALELFQ (71 aa)) is small ATPAse domain (RuvB-S). Positions 288–370 (PMGLDWTDRK…TAQSPLPVWS (83 aa)) are head domain (RuvB-H). DNA is bound by residues Arg343 and Arg348.

It belongs to the RuvB family. In terms of assembly, homohexamer. Forms an RuvA(8)-RuvB(12)-Holliday junction (HJ) complex. HJ DNA is sandwiched between 2 RuvA tetramers; dsDNA enters through RuvA and exits via RuvB. An RuvB hexamer assembles on each DNA strand where it exits the tetramer. Each RuvB hexamer is contacted by two RuvA subunits (via domain III) on 2 adjacent RuvB subunits; this complex drives branch migration. In the full resolvosome a probable DNA-RuvA(4)-RuvB(12)-RuvC(2) complex forms which resolves the HJ.

It localises to the cytoplasm. It catalyses the reaction ATP + H2O = ADP + phosphate + H(+). The RuvA-RuvB-RuvC complex processes Holliday junction (HJ) DNA during genetic recombination and DNA repair, while the RuvA-RuvB complex plays an important role in the rescue of blocked DNA replication forks via replication fork reversal (RFR). RuvA specifically binds to HJ cruciform DNA, conferring on it an open structure. The RuvB hexamer acts as an ATP-dependent pump, pulling dsDNA into and through the RuvAB complex. RuvB forms 2 homohexamers on either side of HJ DNA bound by 1 or 2 RuvA tetramers; 4 subunits per hexamer contact DNA at a time. Coordinated motions by a converter formed by DNA-disengaged RuvB subunits stimulates ATP hydrolysis and nucleotide exchange. Immobilization of the converter enables RuvB to convert the ATP-contained energy into a lever motion, pulling 2 nucleotides of DNA out of the RuvA tetramer per ATP hydrolyzed, thus driving DNA branch migration. The RuvB motors rotate together with the DNA substrate, which together with the progressing nucleotide cycle form the mechanistic basis for DNA recombination by continuous HJ branch migration. Branch migration allows RuvC to scan DNA until it finds its consensus sequence, where it cleaves and resolves cruciform DNA. In Synechococcus sp. (strain JA-3-3Ab) (Cyanobacteria bacterium Yellowstone A-Prime), this protein is Holliday junction branch migration complex subunit RuvB 2.